A 114-amino-acid chain; its full sequence is UPF0342 protein SE_1526 (114 aa).

Belongs to the UPF0342 family.

The polypeptide is UPF0342 protein SE_1526 (Staphylococcus epidermidis (strain ATCC 12228 / FDA PCI 1200)).